Reading from the N-terminus, the 393-residue chain is Pyrin and HIN domain-containing protein 1-like (393 aa).

Residues 1-87 (MVNEYKRIVL…ANKLKNEKAK (87 aa)) form the Pyrin domain. Residues 82 to 188 (KNEKAKAKRK…TPTRSSSRIL (107 aa)) form a disordered region. Residues 87–102 (KAKRKGKGKRKTAAKR) show a composition bias toward basic residues. Polar residues-rich tracts occupy residues 108–118 (PSTSQPMSTTN) and 126–151 (GRST…AIQI). Residues 152-169 (SPTIASSSGQTSSRSSET) are compositionally biased toward low complexity. Over residues 170–186 (LQSIIQSPETPTRSSSR) the composition is skewed to polar residues. The HIN-200 domain maps to 219 to 393 (NVPKEPSEEN…NPGDKLRLML (175 aa)).

The protein belongs to the HIN-200 family.

It is found in the nucleus. This Mus musculus (Mouse) protein is Pyrin and HIN domain-containing protein 1-like.